The following is a 596-amino-acid chain: Leucine-rich repeat and IQ domain-containing protein 4 (596 aa).

LRR repeat units lie at residues L22 to Q44, L59 to L83, K84 to L106, N108 to L129, S130 to R152, L153 to S176, L177 to Q200, K202 to L223, Y224 to L246, R248 to C269, S270 to T293, L295 to W315, S317 to R337, L338 to L361, K362 to L384, S385 to L407, L410 to L433, M434 to P457, L459 to T479, R480 to L502, N504 to Q525, and N527 to A549. Residues R540–A569 form the IQ domain. A compositionally biased stretch (basic residues) spans A569–K587. The interval A569–K596 is disordered.

This chain is Leucine-rich repeat and IQ domain-containing protein 4 (Lrriq4), found in Mus musculus (Mouse).